A 1258-amino-acid chain; its full sequence is Regulator of G-protein signaling 22 (1258 aa).

The segment at 581 to 604 (QQLGRSEPLNAVSSKDGGLEKGSK) is disordered. 2 consecutive RGS domains span residues 845-973 (TFTD…ASRQ) and 1014-1138 (AFRK…TDEK). The interval 1145–1172 (RRQEHKQKRKASDTEEDKAGKSGVKQYA) is disordered. Positions 1154–1164 (KASDTEEDKAG) are enriched in basic and acidic residues.

In terms of assembly, interacts with GNA11, GNA12 and GNA13. In terms of tissue distribution, expressed testis, including in Leydig cells and spermatogenic cells from the spermatogonia to spermatid stages (at protein level).

The protein resides in the cytoplasm. Its subcellular location is the nucleus. Inhibits signal transduction by increasing the GTPase activity of G protein alpha subunits thereby driving them into their inactive GDP-bound form. This chain is Regulator of G-protein signaling 22 (Rgs22), found in Mus musculus (Mouse).